The primary structure comprises 160 residues: SsrA-binding protein (160 aa).

A disordered region spans residues 131 to 160; sequence KKEYDKRHTERERDSDRELQRAVRTKGKDD.

The protein belongs to the SmpB family.

It localises to the cytoplasm. In terms of biological role, required for rescue of stalled ribosomes mediated by trans-translation. Binds to transfer-messenger RNA (tmRNA), required for stable association of tmRNA with ribosomes. tmRNA and SmpB together mimic tRNA shape, replacing the anticodon stem-loop with SmpB. tmRNA is encoded by the ssrA gene; the 2 termini fold to resemble tRNA(Ala) and it encodes a 'tag peptide', a short internal open reading frame. During trans-translation Ala-aminoacylated tmRNA acts like a tRNA, entering the A-site of stalled ribosomes, displacing the stalled mRNA. The ribosome then switches to translate the ORF on the tmRNA; the nascent peptide is terminated with the 'tag peptide' encoded by the tmRNA and targeted for degradation. The ribosome is freed to recommence translation, which seems to be the essential function of trans-translation. The chain is SsrA-binding protein from Pseudomonas syringae pv. tomato (strain ATCC BAA-871 / DC3000).